A 554-amino-acid polypeptide reads, in one-letter code: DM7 family protein GG17593 (554 aa).

It belongs to the DM7 family.

This is DM7 family protein GG17593 from Drosophila erecta (Fruit fly).